The following is a 460-amino-acid chain: Chromosomal replication initiator protein DnaA (460 aa).

The domain I, interacts with DnaA modulators stretch occupies residues 1-91 (MSLINPKVSA…LLWQNEDKSI (91 aa)). A domain II region spans residues 91 to 122 (ICSIDIQVTEEKNSSSSIISKNKEESVNNLGS). Residues 123–342 (PLDPRFTFDN…GALNKVAHTS (220 aa)) are domain III, AAA+ region. ATP is bound by residues glycine 169, glycine 171, lysine 172, and threonine 173. The interval 343-460 (LIGRSMTVES…EINQLRKMFK (118 aa)) is domain IV, binds dsDNA.

It belongs to the DnaA family. Oligomerizes as a right-handed, spiral filament on DNA at oriC.

Its subcellular location is the cytoplasm. Functionally, plays an essential role in the initiation and regulation of chromosomal replication. ATP-DnaA binds to the origin of replication (oriC) to initiate formation of the DNA replication initiation complex once per cell cycle. Binds the DnaA box (a 9 base pair repeat at the origin) and separates the double-stranded (ds)DNA. Forms a right-handed helical filament on oriC DNA; dsDNA binds to the exterior of the filament while single-stranded (ss)DNA is stabiized in the filament's interior. The ATP-DnaA-oriC complex binds and stabilizes one strand of the AT-rich DNA unwinding element (DUE), permitting loading of DNA polymerase. After initiation quickly degrades to an ADP-DnaA complex that is not apt for DNA replication. Binds acidic phospholipids. The protein is Chromosomal replication initiator protein DnaA of Wolbachia sp. subsp. Brugia malayi (strain TRS).